The chain runs to 316 residues: Ribosomal protein L11 methyltransferase (316 aa).

4 residues coordinate S-adenosyl-L-methionine: T163, G184, D206, and N249.

It belongs to the methyltransferase superfamily. PrmA family.

The protein resides in the cytoplasm. The enzyme catalyses L-lysyl-[protein] + 3 S-adenosyl-L-methionine = N(6),N(6),N(6)-trimethyl-L-lysyl-[protein] + 3 S-adenosyl-L-homocysteine + 3 H(+). Its function is as follows. Methylates ribosomal protein L11. This is Ribosomal protein L11 methyltransferase from Pediococcus pentosaceus (strain ATCC 25745 / CCUG 21536 / LMG 10740 / 183-1w).